A 146-amino-acid polypeptide reads, in one-letter code: Large ribosomal subunit protein bL21 (146 aa).

Over residues 95-104 (PKKKTRRKMG) the composition is skewed to basic residues. Residues 95–146 (PKKKTRRKMGHRQELTRVMVKSISISKSTPKSSPKTEATKKSTSSKASKPEN) are disordered. Low complexity predominate over residues 115-146 (KSISISKSTPKSSPKTEATKKSTSSKASKPEN).

Belongs to the bacterial ribosomal protein bL21 family. Part of the 50S ribosomal subunit. Contacts protein L20.

In terms of biological role, this protein binds to 23S rRNA in the presence of protein L20. The polypeptide is Large ribosomal subunit protein bL21 (Prochlorococcus marinus (strain MIT 9515)).